The sequence spans 61 residues: Probable tautomerase lin2709 (61 aa).

Proline 2 acts as the Proton acceptor; via imino nitrogen in catalysis.

Belongs to the 4-oxalocrotonate tautomerase family.

The sequence is that of Probable tautomerase lin2709 from Listeria innocua serovar 6a (strain ATCC BAA-680 / CLIP 11262).